Here is a 264-residue protein sequence, read N- to C-terminus: MTIPYTPGRLDGKVALVTGSGRGIGAAIAIQLGRLGAKVVVNYANSAEHAEKVVAEIKAHGSDAVAFKADMRRVAETAKLFDDAVAHFGHLDIAVSNSGVVSFGHLKDVTEEEFDRVFSLNTRGQFFVAREAYRVLSEGGRIILTSSNTSKDFSVPRHSVYSGSKGAIDSFVRILSKDCGDKKITVNGVAPGGTVTDMFHAVSHHYIPNGEKFTAEERQQMAAHASPLHRNGFPEDIANVVGFLVSKEGEWVNGKVITLDGGAA.

Positions 24, 70, 97, and 130 each coordinate NADP(+). Catalysis depends on proton donor residues serine 146 and serine 147. The NADP(+) site is built by tyrosine 161, lysine 165, and threonine 196. Tyrosine 161 serves as the catalytic Proton acceptor. Lysine 165 (lowers pKa of active site Tyr) is an active-site residue.

Belongs to the short-chain dehydrogenases/reductases (SDR) family.

It participates in secondary metabolite biosynthesis. Functionally, short chain dehydrogenase/reductase; part of the gene cluster that mediates the biosynthesis of the tetrahydroxanthone dimer neosartorin, which exhibits antibacterial activity. The two different monomeric units appear to be synthesized by the same set of enzymes, among which the Baeyer-Villiger monooxygenase nsrF is the key enzyme for the divergence of the biosynthetic routes. The pathway begins with the synthesis of atrochrysone thioester by the polyketide synthase nsrB. The atrochrysone carboxyl ACP thioesterase nsrC then breaks the thioester bond and releases the atrochrysone carboxylic acid from AacuL. Atrochrysone carboxylic acid is decarboxylated by the decarboxylase nsrE, and oxidized by the anthrone oxygenase nsrD to yield emodin. Emodin is then reduced to emodin hydroquinone by the oxidoreductase nsrR. A-ring reduction by the short chain dehydrogenase nsrJ, dehydration by the scytalone dehydratase-like protein nsrI and probable spontaneous re-oxidation, results in overall deoxygenation to chrysophanol. The Baeyer-Villiger monooxygenase nsrF accepts chrysophanol as a substrate to insert one oxygen atom at two different positions to yield the precursors of both monomric units. NsrF is promiscuous/flexible in interacting with the 2 (non methylated and methylated) aromatic rings of chrysophanol, thus diverging the biosynthetic pathway at this point. After the hydrolysis of the lactones, methylesterification by the methyltransferase nsrG yields respectively moniliphenone and 2,2',6'-trihydroxy-4-methyl-6-methoxya-cyldiphenylmethanone. The next steps are the hydroxylation by the FAD-dependent monooxygenase nsrK, followed by isomerization by the monooxygenase nsrQ. The short chain dehydrogenase/reductase nsrO then catalyzes the C-5 ketoreduction to give the xanthone skeleton of blennolide C and 5-acetylblennolide A. The acetyltransferase nsrL has a strict substrate specificity and uses only blennolide A but not blennolide C to yield 5-acetylblennolide A as the single-acetylated product. In the final step of the biosynthesis, the heterodimerization of the 2 xanthones, blennolide C and 5-acetylblennolide A, is catalyzed by the cytochrome P450 monooxygenase nsrP. NsrP can utilize at least three different xanthones as its substrates to perform the dimerization reaction. The polypeptide is Short chain dehydrogenase/reductase nsrJ (Aspergillus novofumigatus (strain IBT 16806)).